The sequence spans 3106 residues: Probable polyketide synthase 29 (3106 aa).

Polar residues predominate over residues Met-1–Ser-11. Residues Met-1 to Tyr-20 are disordered. A Ketosynthase family 3 (KS3) domain is found at Ser-28 to Glu-461. Catalysis depends on for beta-ketoacyl synthase activity residues Cys-200, His-339, and His-384. The tract at residues Gly-661–Tyr-694 is acyl/malonyl transferase. Catalysis depends on Ser-671, which acts as the For acyl/malonyl transferase activity. The N-terminal hotdog fold stretch occupies residues Pro-961 to Ser-1082. In terms of domain architecture, PKS/mFAS DH spans Pro-961–Pro-1266. His-994 functions as the Proton acceptor; for dehydratase activity in the catalytic mechanism. Positions Asn-1099–Pro-1266 are C-terminal hotdog fold. The active-site Proton donor; for dehydratase activity is the Asp-1171. The Carrier domain maps to Asn-2533–His-2610. An O-(pantetheine 4'-phosphoryl)serine modification is found at Ser-2570. Residues Ala-2609–Asn-2656 adopt a coiled-coil conformation. Positions Asn-2614–Asn-2656 are disordered.

It depends on pantetheine 4'-phosphate as a cofactor.

Functionally, probable polyketide synthase. This is Probable polyketide synthase 29 (pks29) from Dictyostelium discoideum (Social amoeba).